The chain runs to 150 residues: Deoxyuridine 5'-triphosphate nucleotidohydrolase (150 aa).

Substrate is bound by residues 68 to 70, asparagine 81, 85 to 87, and lysine 95; these read RSG and TID.

It belongs to the dUTPase family. Mg(2+) serves as cofactor.

It carries out the reaction dUTP + H2O = dUMP + diphosphate + H(+). The protein operates within pyrimidine metabolism; dUMP biosynthesis; dUMP from dCTP (dUTP route): step 2/2. In terms of biological role, this enzyme is involved in nucleotide metabolism: it produces dUMP, the immediate precursor of thymidine nucleotides and it decreases the intracellular concentration of dUTP so that uracil cannot be incorporated into DNA. This chain is Deoxyuridine 5'-triphosphate nucleotidohydrolase, found in Rickettsia bellii (strain OSU 85-389).